The primary structure comprises 454 residues: Tetrahydroanabasine acetyltransferase (454 aa).

Residues His164 and Asp389 each act as proton acceptor in the active site.

This sequence belongs to the plant acyltransferase family. Monomer.

It carries out the reaction tetrahydroanabasine + acetyl-CoA = ammodendrine + CoA. It functions in the pathway alkaloid biosynthesis. Its function is as follows. Tetrahydroanabasine acetyltransferase involved in the accumulation of quinolizidine type antinutritional alkaloids (QAs) natural products. QAs impart a bitter taste to plants, acting as repellents and toxicants for herbivores and predators, and possess a variety of pharmacological effects, including sedative, anticonvulsant, anti-inflammatory, antiviral, antitumor, antipyretic, anti-hepatitis B, antifibrotic, antiallergic, antidiarrheal, analgesic and antimicrobial activities. Mediates the conversion of tetrahydroanabasine into ammodendrine. The sequence is that of Tetrahydroanabasine acetyltransferase from Lupinus albus (White lupine).